A 336-amino-acid polypeptide reads, in one-letter code: HTH-type transcriptional repressor PurR (336 aa).

An HTH lacI-type domain is found at 2–56; that stretch reads ATIKDVAKLAGVSTTTVSHVINKTRFVAEDTSKAVWDAIQQLNYSPSAVARSLKV. Positions 4–23 form a DNA-binding region, H-T-H motif; that stretch reads IKDVAKLAGVSTTTVSHVIN. A DNA-binding region spans residues 48-56; it reads SAVARSLKV. Y73, K188, F219, and D273 together coordinate hypoxanthine.

In terms of assembly, homodimer.

It functions in the pathway purine metabolism; purine nucleotide biosynthesis [regulation]. Its function is as follows. Is the main repressor of the genes involved in the de novo synthesis of purine nucleotides, regulating purB, purC, purEK, purF, purHD, purL, purMN and guaBA expression. PurR is allosterically activated to bind its cognate DNA by binding the purine corepressors, hypoxanthine or guanine, thereby effecting transcription repression. In Actinobacillus pleuropneumoniae serotype 3 (strain JL03), this protein is HTH-type transcriptional repressor PurR.